Reading from the N-terminus, the 634-residue chain is DNA-directed RNA polymerase subunit gamma (634 aa).

The Zn(2+) site is built by C74, C76, C89, and C92. Mg(2+)-binding residues include D471, D473, and D475.

It belongs to the RNA polymerase beta' chain family. RpoC1 subfamily. In terms of assembly, in cyanobacteria the RNAP catalytic core is composed of 2 alpha, 1 beta, 1 beta', 1 gamma and 1 omega subunit. When a sigma factor is associated with the core the holoenzyme is formed, which can initiate transcription. It depends on Mg(2+) as a cofactor. Zn(2+) serves as cofactor.

It catalyses the reaction RNA(n) + a ribonucleoside 5'-triphosphate = RNA(n+1) + diphosphate. DNA-dependent RNA polymerase catalyzes the transcription of DNA into RNA using the four ribonucleoside triphosphates as substrates. In Synechococcus sp. (strain CC9902), this protein is DNA-directed RNA polymerase subunit gamma.